Reading from the N-terminus, the 581-residue chain is Membrane protein insertase YidC (581 aa).

Residues 7-27 (ILIVALAVVSYLMVLQWNEDY) traverse the membrane as a helical segment. Positions 41–62 (AATPALPDTPADTASTGGDDIP) are disordered. 5 helical membrane-spanning segments follow: residues 365–385 (TVDY…LEVI), 388–408 (LLGN…LIFF), 458–478 (LGGC…YWVL), 489–509 (WMFW…PIIM), and 536–556 (PIIF…YWVV).

It belongs to the OXA1/ALB3/YidC family. Type 1 subfamily. In terms of assembly, interacts with the Sec translocase complex via SecD. Specifically interacts with transmembrane segments of nascent integral membrane proteins during membrane integration.

Its subcellular location is the cell inner membrane. Its function is as follows. Required for the insertion and/or proper folding and/or complex formation of integral membrane proteins into the membrane. Involved in integration of membrane proteins that insert both dependently and independently of the Sec translocase complex, as well as at least some lipoproteins. Aids folding of multispanning membrane proteins. The protein is Membrane protein insertase YidC of Ectopseudomonas mendocina (strain ymp) (Pseudomonas mendocina).